The primary structure comprises 374 residues: MAKRDFYEILGLGKNASDEEIKKAYRKLAMKHHPDRNPDSKGAEDKFKEAKEAYEMLSDPQKRDAYDRYGHAGVDPNMGGGGGGGGFADAFGDIFGDIFGQAGGGRGGRGGPQVYRGADLRYNLEITLEQAAHGYDTTIRVPSWDSCETCDGSGAKPGTSPINCTTCGGHGQVRMQQGFFSVLQTCPKCHGSGKINPSPCTACSGAGKIKRNKTLEVKIPSGIDDGMRIRSSGNGEPGMNGGPPGDLYVEIRIKQHAMFQREGDDLHCEIPISFAKAALGGEIEVPTLNGKASFTIPEGTQSGKTFRLRSKGIKGVRSGYAGDLFCHVVVETPVTLTEKQKELLREFELLTIEGGSKHSPQTKSWKDKVKEFFE.

The region spanning 5-70 (DFYEILGLGK…QKRDAYDRYG (66 aa)) is the J domain. The segment at 28-47 (LAMKHHPDRNPDSKGAEDKF) is disordered. Residues 35-47 (DRNPDSKGAEDKF) show a composition bias toward basic and acidic residues. The CR-type zinc finger occupies 134 to 212 (GYDTTIRVPS…CSGAGKIKRN (79 aa)). The Zn(2+) site is built by Cys147, Cys150, Cys164, Cys167, Cys186, Cys189, Cys200, and Cys203. CXXCXGXG motif repeat units follow at residues 147 to 154 (CETCDGSG), 164 to 171 (CTTCGGHG), 186 to 193 (CPKCHGSG), and 200 to 207 (CTACSGAG).

The protein belongs to the DnaJ family. As to quaternary structure, homodimer. Requires Zn(2+) as cofactor.

The protein resides in the cytoplasm. Participates actively in the response to hyperosmotic and heat shock by preventing the aggregation of stress-denatured proteins and by disaggregating proteins, also in an autonomous, DnaK-independent fashion. Unfolded proteins bind initially to DnaJ; upon interaction with the DnaJ-bound protein, DnaK hydrolyzes its bound ATP, resulting in the formation of a stable complex. GrpE releases ADP from DnaK; ATP binding to DnaK triggers the release of the substrate protein, thus completing the reaction cycle. Several rounds of ATP-dependent interactions between DnaJ, DnaK and GrpE are required for fully efficient folding. Also involved, together with DnaK and GrpE, in the DNA replication of plasmids through activation of initiation proteins. The protein is Chaperone protein DnaJ of Herminiimonas arsenicoxydans.